A 602-amino-acid chain; its full sequence is Multicopper oxidase aurL2 (602 aa).

Positions 1–17 are cleaved as a signal peptide; sequence MLFRFLALLPFVAGAFA. Plastocyanin-like domains are found at residues 38–149 and 160–317; these read DIKI…VRDA and IPLL…KYRC. N-linked (GlcNAc...) asparagine glycosylation is found at Asn52 and Asn80. Cu cation contacts are provided by His84, His86, His130, and His132. Asn201, Asn247, Asn337, Asn383, Asn387, Asn419, and Asn424 each carry an N-linked (GlcNAc...) asparagine glycan. In terms of domain architecture, Plastocyanin-like 3 spans 421–556; that stretch reads TTPNYTLALE…QVMGMATVWV (136 aa). Residue His469 coordinates Cu cation. Asn482 and Asn486 each carry an N-linked (GlcNAc...) asparagine glycan.

The protein belongs to the multicopper oxidase family.

It participates in pigment biosynthesis. Its function is as follows. Multicopper oxidase; part of the gene cluster that mediates the biosynthesis of aurofusarin, a red mycelium pigment which is acting as a mycotoxin. The first step is performed by the polyketide synthase which condenses one acetyl-CoA and 6 malonyl-CoA units to form the first intermediate, the cyclic heptaketide and yellow pigment YWA1. The C2 hydroxyl group in the pyrone ring of YWA1 is probably formed during ring closure by an aldol-type cyclization reaction. The dehydratase aurZ then acts as the first tailoring enzyme in the aurofusarin biosynthetic pathway by converting YWA1 to nor-rubrofusarin. Nor-rubrofusarin is then methylated to rubrofusarin by the O-methyltransferase aurJ. Rubrofusarin is then transported across the plasma membrane by the rubrofusarin-specific pump aurT for further enzymatic processing by the extracellular complex composed of GIP1, aurF, aurO and aurS to yield aurofusarin. The protein is Multicopper oxidase aurL2 (aurL2) of Gibberella zeae (strain ATCC MYA-4620 / CBS 123657 / FGSC 9075 / NRRL 31084 / PH-1) (Wheat head blight fungus).